Consider the following 157-residue polypeptide: 2-C-methyl-D-erythritol 2,4-cyclodiphosphate synthase (157 aa).

A divalent metal cation is bound by residues Asp8 and His10. 4-CDP-2-C-methyl-D-erythritol 2-phosphate contacts are provided by residues 8–10 (DVH) and 34–35 (HS). His42 serves as a coordination point for a divalent metal cation. 4-CDP-2-C-methyl-D-erythritol 2-phosphate contacts are provided by residues 56–58 (DIG), 61–65 (FPDTD), 100–106 (AQKPKMA), 132–135 (TTTE), and Phe139.

The protein belongs to the IspF family. In terms of assembly, homotrimer. A divalent metal cation is required as a cofactor.

It catalyses the reaction 4-CDP-2-C-methyl-D-erythritol 2-phosphate = 2-C-methyl-D-erythritol 2,4-cyclic diphosphate + CMP. Its pathway is isoprenoid biosynthesis; isopentenyl diphosphate biosynthesis via DXP pathway; isopentenyl diphosphate from 1-deoxy-D-xylulose 5-phosphate: step 4/6. Its function is as follows. Involved in the biosynthesis of isopentenyl diphosphate (IPP) and dimethylallyl diphosphate (DMAPP), two major building blocks of isoprenoid compounds. Catalyzes the conversion of 4-diphosphocytidyl-2-C-methyl-D-erythritol 2-phosphate (CDP-ME2P) to 2-C-methyl-D-erythritol 2,4-cyclodiphosphate (ME-CPP) with a corresponding release of cytidine 5-monophosphate (CMP). The sequence is that of 2-C-methyl-D-erythritol 2,4-cyclodiphosphate synthase from Alkaliphilus oremlandii (strain OhILAs) (Clostridium oremlandii (strain OhILAs)).